We begin with the raw amino-acid sequence, 301 residues long: ATP synthase gamma chain (301 aa).

This sequence belongs to the ATPase gamma chain family. In terms of assembly, F-type ATPases have 2 components, CF(1) - the catalytic core - and CF(0) - the membrane proton channel. CF(1) has five subunits: alpha(3), beta(3), gamma(1), delta(1), epsilon(1). CF(0) has three main subunits: a, b and c.

Its subcellular location is the cell inner membrane. Produces ATP from ADP in the presence of a proton gradient across the membrane. The gamma chain is believed to be important in regulating ATPase activity and the flow of protons through the CF(0) complex. The chain is ATP synthase gamma chain from Helicobacter pylori (strain P12).